Reading from the N-terminus, the 391-residue chain is Choline/ethanolaminephosphotransferase 1 (391 aa).

Topologically, residues 1–49 (MGYFVPDSHIENLKSYKYQSEDRSLVSKYFLKPFWQRFCHIFPTWMAPN) are lumenal. Residues 50–69 (IITLSGFAFIVINVLTVFYY) form a helical membrane-spanning segment. Residues 70 to 172 (DPNLNTDTPR…YHTHTLYLSE (103 aa)) lie on the Cytoplasmic side of the membrane. Residues 173-193 (FSGPVEGILIVCVSLILTGIY) form a helical membrane-spanning segment. Topologically, residues 194–211 (GKQVIWHTYLFTITVGDK) are lumenal. The chain crosses the membrane as a helical span at residues 212–232 (VIDVDTLDIVFSLAVFGLVMN). Residues 233–264 (ALSAKRNVDKYYRNSTSSANNITQIEQDSAIK) are Cytoplasmic-facing. Residues 265-282 (GLLPFFAYYASIALLVWM) traverse the membrane as a helical segment. Residues 283–285 (QPS) lie on the Lumenal side of the membrane. A helical transmembrane segment spans residues 286–308 (FITLSFILSVGFTGAFTVGRIIV). The Cytoplasmic segment spans residues 309-321 (CHLTKQSFPMFNA). A helical transmembrane segment spans residues 322-342 (PMLIPLCQIVLYKICLSLWGI). Residues 343–346 (ESNK) lie on the Lumenal side of the membrane. A helical transmembrane segment spans residues 347–367 (IVFALSWLGFGLSLGVHIMFM). Residues 368-391 (NDIIHEFTEYLDVYALSIKRSKLT) are Cytoplasmic-facing.

The protein belongs to the CDP-alcohol phosphatidyltransferase class-I family. The cofactor is Mg(2+).

It localises to the golgi apparatus membrane. The enzyme catalyses CDP-ethanolamine + a 1,2-diacyl-sn-glycerol = a 1,2-diacyl-sn-glycero-3-phosphoethanolamine + CMP + H(+). The catalysed reaction is CDP-choline + a 1,2-diacyl-sn-glycerol = a 1,2-diacyl-sn-glycero-3-phosphocholine + CMP + H(+). It carries out the reaction CDP-N-methylethanolamine + a 1,2-diacyl-sn-glycerol = a 1,2-diacyl-sn-glycero-3-phospho-N-methylethanolamine + CMP + H(+). It catalyses the reaction CDP-N,N-dimethylethanolamine + a 1,2-diacyl-sn-glycerol = a 1,2-diacyl-sn-glycero-3-phospho-N,N-dimethylethanolamine + CMP + H(+). The enzyme catalyses 1,2-di-(9Z-octadecenoyl)-glycerol + CDP-choline = 1,2-di-(9Z-octadecenoyl)-sn-glycero-3-phosphocholine + CMP + H(+). The catalysed reaction is 1,2-di-(9Z-octadecenoyl)-glycerol + CDP-ethanolamine = 1,2-di-(9Z-octadecenoyl)-sn-glycero-3-phosphoethanolamine + CMP + H(+). It participates in phospholipid metabolism; phosphatidylethanolamine biosynthesis; phosphatidylethanolamine from ethanolamine: step 3/3. The protein operates within phospholipid metabolism; phosphatidylcholine biosynthesis; phosphatidylcholine from phosphocholine: step 2/2. With respect to regulation, requires a divalent cation activator, and is inhibited by CMP. Activated by phospholipids, especially phosphatidylcholine. Functionally, catalyzes the final step in the CDP-ethanolamine route leading to phosphatidylethanolamine (PE). Can also catalyze the formation of phosphatidylcholine (PC) from CDP-choline, but does not substantially contribute to PC biosynthesis. Preferentially uses CDP-dimethylethanolamine and CDP-propanolamine as aminoalcohol substrates. Shows highest activity toward di-unsaturated diacylglycerol species as lipid substrates. The CDP-ethanolamine pathway may play a role in maintaining the proper PE species distribution. This Saccharomyces cerevisiae (strain ATCC 204508 / S288c) (Baker's yeast) protein is Choline/ethanolaminephosphotransferase 1 (EPT1).